The sequence spans 500 residues: Probable lipoprotein aminopeptidase LpqL (500 aa).

Positions 1–24 are cleaved as a signal peptide; sequence MVNKSRMMPAVLAVAVVVAFLTTG. A lipid anchor (N-palmitoyl cysteine) is attached at cysteine 25. A lipid anchor (S-diacylglycerol cysteine) is attached at cysteine 25. The region spanning 140–231 is the PA domain; sequence VTGPLVAAPA…VTKSVGFQLR (92 aa). The Zn(2+) site is built by histidine 271 and aspartate 283. The active-site Proton acceptor is the glutamate 316. Residues glutamate 317, aspartate 345, and histidine 448 each coordinate Zn(2+).

Belongs to the peptidase M28 family. M28A subfamily. It depends on Zn(2+) as a cofactor. Modified by Lgt on Cys-25 with an S-linked diacylglycerol with a mixture of C16 and C19 fatty acids (palmitic and tuberculostearic acid), signal peptide is removed by LspA, modified by Lnt with an amide-linked mixture of C16 and C19 fatty acids, expressed in M.bovis.

The protein localises to the cell membrane. It carries out the reaction Release of an N-terminal amino acid, Xaa-|-Yaa-, in which Xaa is preferably Leu, but may be other amino acids including Pro although not Arg or Lys, and Yaa may be Pro. Amino acid amides and methyl esters are also readily hydrolyzed, but rates on arylamides are exceedingly low.. Its function is as follows. An aminopeptidase; acts on free N-terminal amino groups with a very strong preference for Leu in the first position. The protein is Probable lipoprotein aminopeptidase LpqL (lpqL) of Mycobacterium tuberculosis (strain ATCC 25618 / H37Rv).